We begin with the raw amino-acid sequence, 514 residues long: Serine--tRNA ligase, cytoplasmic (514 aa).

Met-1 carries the post-translational modification N-acetylmethionine. Positions 9-61 (RVDKGGDPALIRETQEKRFKDPGLVDQLVKADSEWRRCRFRADNLNKLKNLCS) are interaction with tRNA. Ser-241 carries the post-translational modification Phosphoserine. L-serine-binding residues include Thr-271 and Arg-302. ATP contacts are provided by residues 302-304 (RQE) and 318-321 (VHQF). Lys-323 is subject to N6-acetyllysine. Glu-325 contacts L-serine. 391-394 (ELVS) contributes to the ATP binding site. Asn-427 is an L-serine binding site. Residues 472 to 514 (KPAPIDQEPSKKQKKQHEGSKKKAAARDVTLENRLQNMEVTDA) are disordered. The span at 479–502 (EPSKKQKKQHEGSKKKAAARDVTL) shows a compositional bias: basic and acidic residues. The Nuclear localization signal motif lies at 482 to 494 (KKQKKQHEGSKKK). A compositionally biased stretch (polar residues) spans 504–514 (NRLQNMEVTDA).

The protein belongs to the class-II aminoacyl-tRNA synthetase family. Type-1 seryl-tRNA synthetase subfamily. As to quaternary structure, homodimer. The tRNA molecule may bind across the dimer. Interacts with SIRT2. Interacts with METTL6; interaction is required for the tRNA N(3)-methylcytidine methyltransferase activity of METTL6.

The protein localises to the cytoplasm. It is found in the nucleus. The catalysed reaction is tRNA(Ser) + L-serine + ATP = L-seryl-tRNA(Ser) + AMP + diphosphate + H(+). It carries out the reaction tRNA(Sec) + L-serine + ATP = L-seryl-tRNA(Sec) + AMP + diphosphate + H(+). The protein operates within aminoacyl-tRNA biosynthesis; selenocysteinyl-tRNA(Sec) biosynthesis; L-seryl-tRNA(Sec) from L-serine and tRNA(Sec): step 1/1. Its function is as follows. Catalyzes the attachment of serine to tRNA(Ser) in a two-step reaction: serine is first activated by ATP to form Ser-AMP and then transferred to the acceptor end of tRNA(Ser). Is probably also able to aminoacylate tRNA(Sec) with serine, to form the misacylated tRNA L-seryl-tRNA(Sec), which will be further converted into selenocysteinyl-tRNA(Sec). In the nucleus, binds to the VEGFA core promoter and prevents MYC binding and transcriptional activation by MYC. Recruits SIRT2 to the VEGFA promoter, promoting deacetylation of histone H4 at 'Lys-16' (H4K16). Thereby, inhibits the production of VEGFA and sprouting angiogenesis mediated by VEGFA. This Oryctolagus cuniculus (Rabbit) protein is Serine--tRNA ligase, cytoplasmic (SARS1).